Here is a 317-residue protein sequence, read N- to C-terminus: Putative 2-hydroxyacid dehydrogenase SAOUHSC_02577 (317 aa).

NAD(+) is bound by residues 155–156 (EI), 234–236 (ASR), and aspartate 260. Arginine 236 is an active-site residue. Glutamate 265 is a catalytic residue. Histidine 283 acts as the Proton donor in catalysis. 283–286 (HIGN) lines the NAD(+) pocket.

It belongs to the D-isomer specific 2-hydroxyacid dehydrogenase family.

This Staphylococcus aureus (strain NCTC 8325 / PS 47) protein is Putative 2-hydroxyacid dehydrogenase SAOUHSC_02577.